A 564-amino-acid polypeptide reads, in one-letter code: Probable cysteine--tRNA ligase, mitochondrial (564 aa).

Cys-78 contacts Zn(2+). Gly-79 provides a ligand contact to L-cysteine. Residues 80–90 (PTVYDHAHLGH) carry the 'HIGH' region motif. Thr-119 is a binding site for L-cysteine. A 'KIIK' region motif is present at residues 124-127 (KIIK). The Zn(2+) site is built by Cys-257, His-282, and Glu-286. Residue His-282 participates in L-cysteine binding. A 'KMSKS' region motif is present at residues 317–321 (KMSKS). Position 320 (Lys-320) interacts with ATP.

The protein belongs to the class-I aminoacyl-tRNA synthetase family. Zn(2+) serves as cofactor.

It localises to the mitochondrion. The enzyme catalyses tRNA(Cys) + L-cysteine + ATP = L-cysteinyl-tRNA(Cys) + AMP + diphosphate. It carries out the reaction 2 L-cysteine = S-sulfanyl-L-cysteine + L-alanine. It catalyses the reaction S-sulfanyl-L-cysteine + L-cysteine = S-disulfanyl-L-cysteine + L-alanine. The catalysed reaction is S-sulfanyl-L-cysteine + tRNA(Cys) + ATP = (S)-sulfanyl-L-cysteinyl-tRNA(Cys) + AMP + diphosphate. The enzyme catalyses S-disulfanyl-L-cysteine + tRNA(Cys) + ATP = (S)-disulfanyl-L-cysteinyl-tRNA(Cys) + AMP + diphosphate. Its function is as follows. Mitochondrial cysteine-specific aminoacyl-tRNA synthetase that catalyzes the ATP-dependent ligation of cysteine to tRNA(Cys). Functionally, in addition to its role as an aminoacyl-tRNA synthetase, has also cysteine persulfide synthase activity. Produces reactive persulfide species such as cysteine persulfide (CysSSH) from substrate cysteine and mediate direct incorporation of CysSSH into proteins during translations, resulting in protein persulfides and polysulfides. CysSSHs behave as potent antioxidants and cellular protectants. This Homo sapiens (Human) protein is Probable cysteine--tRNA ligase, mitochondrial.